Reading from the N-terminus, the 446-residue chain is RUN domain-containing protein 3A (446 aa).

The interaction with RAP2A stretch occupies residues 1 to 298 (MEASFVQTTM…LQLQLEEAAA (298 aa)). Positions 52–189 (DDSSEEFVNF…IDFSFCLKGE (138 aa)) constitute an RUN domain. T215 is subject to Phosphothreonine. The tract at residues 216–239 (DEEERHSAESSTSEDNSPEHPYLP) is disordered. S232 is modified (phosphoserine). Residues 267-322 (YLEELVRLRESQLKDLEAENRRLQLQLEEAAAQNQREKRELEGVILELQEQLTGLI) adopt a coiled-coil conformation. Over residues 372 to 384 (PLSAEASLSSDSQ) the composition is skewed to polar residues. The interval 372–403 (PLSAEASLSSDSQRLGEAKRDEEPWGPIGKDP) is disordered. A compositionally biased stretch (basic and acidic residues) spans 385-394 (RLGEAKRDEE). A phosphoserine mark is found at S416 and S419.

It belongs to the RUNDC3 family. As to quaternary structure, interacts with the GTP-bound form of RAP2A. In terms of tissue distribution, brain.

Its function is as follows. May act as an effector of RAP2A in neuronal cells. This Mus musculus (Mouse) protein is RUN domain-containing protein 3A (Rundc3a).